Reading from the N-terminus, the 550-residue chain is Hydroxylamine reductase (550 aa).

The [2Fe-2S] cluster site is built by Cys3, Cys6, Cys18, and Cys25. Hybrid [4Fe-2O-2S] cluster-binding residues include His249, Glu273, Cys317, Cys405, Cys433, Cys458, Glu492, and Lys494. Cys405 is subject to Cysteine persulfide.

Belongs to the HCP family. Requires [2Fe-2S] cluster as cofactor. The cofactor is hybrid [4Fe-2O-2S] cluster.

It localises to the cytoplasm. The catalysed reaction is A + NH4(+) + H2O = hydroxylamine + AH2 + H(+). Its function is as follows. Catalyzes the reduction of hydroxylamine to form NH(3) and H(2)O. The polypeptide is Hydroxylamine reductase (Salmonella typhi).